Consider the following 627-residue polypeptide: Altered inheritance of mitochondria protein 9, mitochondrial (627 aa).

The transit peptide at 1–43 (MIRYTVAGHSRRCVVGASKRVGAIKCITVAATKRFISNKSNEV) directs the protein to the mitochondrion.

This sequence belongs to the AIM9 family.

The protein resides in the mitochondrion. This chain is Altered inheritance of mitochondria protein 9, mitochondrial (AIM9), found in Saccharomyces cerevisiae (strain JAY291) (Baker's yeast).